Here is a 423-residue protein sequence, read N- to C-terminus: Anhydromevalonate phosphate decarboxylase (423 aa).

Residues N134 and E197 each coordinate Mn(2+). D245 (proton acceptor) is an active-site residue.

This sequence belongs to the UbiD family. It depends on prenylated FMN as a cofactor. Mn(2+) is required as a cofactor.

The enzyme catalyses (2E)-3-methyl-5-phosphooxypent-2-enoate + H(+) = isopentenyl phosphate + CO2. It participates in isoprenoid biosynthesis; isopentenyl diphosphate biosynthesis via mevalonate pathway. Its function is as follows. Catalyzes the conversion of trans-anhydromevalonate 5-phosphate (tAHMP) into isopentenyl phosphate. Involved in the archaeal mevalonate (MVA) pathway, which provides fundamental precursors for isoprenoid biosynthesis, such as isopentenyl diphosphate (IPP) and dimethylallyl diphosphate (DMAPP). In Methanothermobacter thermautotrophicus (strain ATCC 29096 / DSM 1053 / JCM 10044 / NBRC 100330 / Delta H) (Methanobacterium thermoautotrophicum), this protein is Anhydromevalonate phosphate decarboxylase.